The chain runs to 573 residues: Proline--tRNA ligase (573 aa).

It belongs to the class-II aminoacyl-tRNA synthetase family. ProS type 1 subfamily. Homodimer.

Its subcellular location is the cytoplasm. The catalysed reaction is tRNA(Pro) + L-proline + ATP = L-prolyl-tRNA(Pro) + AMP + diphosphate. Functionally, catalyzes the attachment of proline to tRNA(Pro) in a two-step reaction: proline is first activated by ATP to form Pro-AMP and then transferred to the acceptor end of tRNA(Pro). As ProRS can inadvertently accommodate and process non-cognate amino acids such as alanine and cysteine, to avoid such errors it has two additional distinct editing activities against alanine. One activity is designated as 'pretransfer' editing and involves the tRNA(Pro)-independent hydrolysis of activated Ala-AMP. The other activity is designated 'posttransfer' editing and involves deacylation of mischarged Ala-tRNA(Pro). The misacylated Cys-tRNA(Pro) is not edited by ProRS. The sequence is that of Proline--tRNA ligase from Limosilactobacillus fermentum (strain NBRC 3956 / LMG 18251) (Lactobacillus fermentum).